Consider the following 361-residue polypeptide: Chorismate synthase (361 aa).

The NADP(+) site is built by Arg48 and Arg54. FMN is bound by residues 125–127, 238–239, Gly278, 293–297, and Arg319; these read RSS, NA, and KPTSS.

It belongs to the chorismate synthase family. As to quaternary structure, homotetramer. It depends on FMNH2 as a cofactor.

The enzyme catalyses 5-O-(1-carboxyvinyl)-3-phosphoshikimate = chorismate + phosphate. It functions in the pathway metabolic intermediate biosynthesis; chorismate biosynthesis; chorismate from D-erythrose 4-phosphate and phosphoenolpyruvate: step 7/7. Its function is as follows. Catalyzes the anti-1,4-elimination of the C-3 phosphate and the C-6 proR hydrogen from 5-enolpyruvylshikimate-3-phosphate (EPSP) to yield chorismate, which is the branch point compound that serves as the starting substrate for the three terminal pathways of aromatic amino acid biosynthesis. This reaction introduces a second double bond into the aromatic ring system. The sequence is that of Chorismate synthase from Escherichia coli O157:H7.